We begin with the raw amino-acid sequence, 437 residues long: Putative metabolite transport protein NicT (437 aa).

A run of 12 helical transmembrane segments spans residues 28-48, 66-86, 93-113, 123-143, 152-172, 189-209, 254-274, 290-310, 320-340, 347-367, 374-394, and 411-431; these read LIPFLCFCYLAAYLDRINVGF, LGAGLFFVGYIIFEVPSNLIL, LWIARIMITWGLLSACTMFVT, FLLGAAEAGFLPGVLYYLTMW, IIALFMIGLPLSSVIGGPISG, WLFLLEAIPSVLLGILTFWAL, VWMLGGIDFSILLSAYAMGFW, IGLLTAIPSLAALAGMLMIGA, WHIIVPFIIGAIAMASSTLFS, VVLFAIASAAIIGAVPVFFSL, GTAAATGFALACSVANIAGLV, and AALWVFAGCLILSCFLVIALP.

It belongs to the major facilitator superfamily.

It localises to the membrane. Probable transporter, possibly involved in the aerobic nicotinate degradation pathway. This chain is Putative metabolite transport protein NicT (nicT), found in Pseudomonas putida (strain ATCC 47054 / DSM 6125 / CFBP 8728 / NCIMB 11950 / KT2440).